We begin with the raw amino-acid sequence, 485 residues long: Aspartyl/glutamyl-tRNA(Asn/Gln) amidotransferase subunit B (485 aa).

It belongs to the GatB/GatE family. GatB subfamily. In terms of assembly, heterotrimer of A, B and C subunits.

It carries out the reaction L-glutamyl-tRNA(Gln) + L-glutamine + ATP + H2O = L-glutaminyl-tRNA(Gln) + L-glutamate + ADP + phosphate + H(+). The enzyme catalyses L-aspartyl-tRNA(Asn) + L-glutamine + ATP + H2O = L-asparaginyl-tRNA(Asn) + L-glutamate + ADP + phosphate + 2 H(+). In terms of biological role, allows the formation of correctly charged Asn-tRNA(Asn) or Gln-tRNA(Gln) through the transamidation of misacylated Asp-tRNA(Asn) or Glu-tRNA(Gln) in organisms which lack either or both of asparaginyl-tRNA or glutaminyl-tRNA synthetases. The reaction takes place in the presence of glutamine and ATP through an activated phospho-Asp-tRNA(Asn) or phospho-Glu-tRNA(Gln). The sequence is that of Aspartyl/glutamyl-tRNA(Asn/Gln) amidotransferase subunit B from Bordetella petrii (strain ATCC BAA-461 / DSM 12804 / CCUG 43448).